Reading from the N-terminus, the 212-residue chain is uncharacterized protein (212 aa).

The signal sequence occupies residues 1–20; the sequence is MRRVLLCFLTLILLLPAASA.

This is an uncharacterized protein from Archaeoglobus fulgidus (strain ATCC 49558 / DSM 4304 / JCM 9628 / NBRC 100126 / VC-16).